The chain runs to 366 residues: D-alanine--D-alanine ligase (366 aa).

Residues 148-357 (KMTFEQAGLA…FPELVDRLIQ (210 aa)) enclose the ATP-grasp domain. 184–239 (EAALGYPAFVKPANLGSSVGIAKVRSRQELEAALDNAASYDRRLVVEAGVVAREVE) is an ATP binding site. Mg(2+)-binding residues include Asp310, Glu324, and Asn326.

Belongs to the D-alanine--D-alanine ligase family. Mg(2+) serves as cofactor. It depends on Mn(2+) as a cofactor.

The protein localises to the cytoplasm. The enzyme catalyses 2 D-alanine + ATP = D-alanyl-D-alanine + ADP + phosphate + H(+). It functions in the pathway cell wall biogenesis; peptidoglycan biosynthesis. Cell wall formation. This chain is D-alanine--D-alanine ligase, found in Nostoc punctiforme (strain ATCC 29133 / PCC 73102).